Reading from the N-terminus, the 433-residue chain is 4-hydroxy-3-methylbut-2-en-1-yl diphosphate synthase (flavodoxin) (433 aa).

[4Fe-4S] cluster-binding residues include C320, C323, C366, and E373.

The protein belongs to the IspG family. It depends on [4Fe-4S] cluster as a cofactor.

It catalyses the reaction (2E)-4-hydroxy-3-methylbut-2-enyl diphosphate + oxidized [flavodoxin] + H2O + 2 H(+) = 2-C-methyl-D-erythritol 2,4-cyclic diphosphate + reduced [flavodoxin]. It functions in the pathway isoprenoid biosynthesis; isopentenyl diphosphate biosynthesis via DXP pathway; isopentenyl diphosphate from 1-deoxy-D-xylulose 5-phosphate: step 5/6. Functionally, converts 2C-methyl-D-erythritol 2,4-cyclodiphosphate (ME-2,4cPP) into 1-hydroxy-2-methyl-2-(E)-butenyl 4-diphosphate. The sequence is that of 4-hydroxy-3-methylbut-2-en-1-yl diphosphate synthase (flavodoxin) from Beijerinckia indica subsp. indica (strain ATCC 9039 / DSM 1715 / NCIMB 8712).